We begin with the raw amino-acid sequence, 73 residues long: MSAQKIYLASLLLFICLVFPQSTAIVCNFEGHCVTSDDCINVCKSGEDPFLCVRSGPHKGMCCCLKTNGSVLE.

An N-terminal signal peptide occupies residues Met-1–Ala-24. Intrachain disulfides connect Cys-27-Cys-64, Cys-33-Cys-52, Cys-39-Cys-62, and Cys-43-Cys-63.

The protein belongs to the DEFL family.

The protein localises to the secreted. This Arabidopsis thaliana (Mouse-ear cress) protein is Putative defensin-like protein 277.